The primary structure comprises 118 residues: MPRVKRGVTARARHKKVLNAAKGYYGARSRIYRVAVQAVTKAGQYAYRDRRQKKRQFRQLWIVRINAAARLNGLSYSRFINGLKKASIEIDRKILSDIAVHDKATFTALVEKAKAALA.

The protein belongs to the bacterial ribosomal protein bL20 family.

Functionally, binds directly to 23S ribosomal RNA and is necessary for the in vitro assembly process of the 50S ribosomal subunit. It is not involved in the protein synthesizing functions of that subunit. This Tolumonas auensis (strain DSM 9187 / NBRC 110442 / TA 4) protein is Large ribosomal subunit protein bL20.